Reading from the N-terminus, the 334-residue chain is MIDPRLPLTDIHRHLDGNIRAQTILDLGQQFNLNLPANELDTLRPHVQITKTEPDLVSFLQKLDWGVAVLGSLDACRRVAYENVEDAAHAGLHYAELRFSPFYMAMKHQLPITGVVEAVIDGIASGCRDFNIDIRLIGILSRTFGEQACLQELDSLLAHREGITALDLAGDELGFPGSLFRRHFNRARDAGLRITVHAGEAAGPESIWQAIRELGAERIGHGVKAVEDRKLMDYLAEHKIGIESCLTSNIQTSTVVSLATHPLATFLRHGIVASINTDDPAVQGIEIAHEYLVAAPAAGLTPHEIRQAQANGLEMAFISEQEKQALRDKVFPIS.

Zn(2+) contacts are provided by His12 and His14. Substrate contacts are provided by His14, Asp16, and Gly170. His197 serves as a coordination point for Zn(2+). Residue Glu200 is the Proton donor of the active site. Asp278 contacts Zn(2+). Residue Asp279 coordinates substrate.

The protein belongs to the metallo-dependent hydrolases superfamily. Adenosine and AMP deaminases family. Adenosine deaminase subfamily. It depends on Zn(2+) as a cofactor.

It catalyses the reaction adenosine + H2O + H(+) = inosine + NH4(+). The enzyme catalyses 2'-deoxyadenosine + H2O + H(+) = 2'-deoxyinosine + NH4(+). Its function is as follows. Catalyzes the hydrolytic deamination of adenosine and 2-deoxyadenosine. The chain is Adenosine deaminase from Yersinia pseudotuberculosis serotype O:1b (strain IP 31758).